Consider the following 98-residue polypeptide: NADH-ubiquinone oxidoreductase chain 4L (98 aa).

3 helical membrane passes run 1–21 (MSLV…GLLM), 29–49 (SLLC…LTIL), and 61–81 (IILL…LVMV).

The protein belongs to the complex I subunit 4L family. In terms of assembly, core subunit of respiratory chain NADH dehydrogenase (Complex I) which is composed of 45 different subunits.

It is found in the mitochondrion inner membrane. It carries out the reaction a ubiquinone + NADH + 5 H(+)(in) = a ubiquinol + NAD(+) + 4 H(+)(out). In terms of biological role, core subunit of the mitochondrial membrane respiratory chain NADH dehydrogenase (Complex I) which catalyzes electron transfer from NADH through the respiratory chain, using ubiquinone as an electron acceptor. Part of the enzyme membrane arm which is embedded in the lipid bilayer and involved in proton translocation. The chain is NADH-ubiquinone oxidoreductase chain 4L (MT-ND4L) from Elaphodus cephalophus (Tufted deer).